The following is a 272-amino-acid chain: Transcription factor E2F6 (272 aa).

The binding to corepressors stretch occupies residues M1 to P62. A DNA-binding region spans residues Y50–S129. The DEF box signature appears at K95 to S129. The dimerization stretch occupies residues D130 to V222. The interval L143–C164 is leucine-zipper. The transcription repression stretch occupies residues D173–Q272. Residues H242–Q272 are disordered.

Belongs to the E2F/DP family. In terms of assembly, forms heterodimers with DP family members TFDP1 or TFDP2. Component of the DRTF1/E2F transcription factor complex. Part of the E2F6.com-1 complex in G0 phase composed of E2F6, MGA, MAX, TFDP1, CBX3, BAT8, EUHMTASE1, RING1, RNF2, MBLR, L3MBTL2 and YAF2. Component of some MLL1/MLL complex, at least composed of the core components KMT2A/MLL1, ASH2L, HCFC1/HCF1, WDR5 and RBBP5, as well as the facultative components BACC1, CHD8, E2F6, HSP70, INO80C, KANSL1, LAS1L, MAX, MCRS1, MGA, KAT8/MOF, PELP1, PHF20, PRP31, RING2, RUVB1/TIP49A, RUVB2/TIP49B, SENP3, TAF1, TAF4, TAF6, TAF7, TAF9 and TEX10.

The protein localises to the nucleus. Inhibitor of E2F-dependent transcription. Binds DNA cooperatively with DP proteins through the E2 recognition site, 5'-TTTC[CG]CGC-3'. Has a preference for the 5'-TTTCCCGC-3' E2F recognition site. E2F6 lacks the transcriptional activation and pocket protein binding domains. Appears to regulate a subset of E2F-dependent genes whose products are required for entry into the cell cycle but not for normal cell cycle progression. Represses expression of some meiosis-specific genes, including SLC25A31/ANT4. May silence expression via the recruitment of a chromatin remodeling complex containing histone H3-K9 methyltransferase activity. Overexpression delays the exit of cells from the S-phase. This Mus musculus (Mouse) protein is Transcription factor E2F6.